The primary structure comprises 319 residues: Ninja-family protein AFP4 (319 aa).

The segment covering 39–54 (DSEHGENQQEAKKRED) has biased composition (basic and acidic residues). 3 disordered regions span residues 39–63 (DSEH…EKDV), 99–120 (FVFD…IVGR), and 205–228 (VTGP…NVEN).

This sequence belongs to the Ninja family. In terms of assembly, interacts with ABI5/DPBF1, AREB3/DPBF3, EEL/DPBF4, ABF1 and ABF3/DPBF5. In terms of tissue distribution, predominantly expressed in roots and seedlings.

Its subcellular location is the nucleus. Its function is as follows. Acts as a negative regulator of abscisic acid (ABA) and salinity responses. This is Ninja-family protein AFP4 (AFP4) from Arabidopsis thaliana (Mouse-ear cress).